The chain runs to 228 residues: L-ribulose-5-phosphate 4-epimerase UlaF (228 aa).

Substrate is bound by residues 26-27 (GN), 43-44 (SG), and 72-73 (SS). Residues Asp74, His93, and His95 each coordinate Zn(2+). Asp118 acts as the Proton donor/acceptor in catalysis. A Zn(2+)-binding site is contributed by His167. Residue Tyr225 is the Proton donor/acceptor of the active site.

It belongs to the aldolase class II family. AraD/FucA subfamily. Requires Zn(2+) as cofactor.

It carries out the reaction L-ribulose 5-phosphate = D-xylulose 5-phosphate. It functions in the pathway cofactor degradation; L-ascorbate degradation; D-xylulose 5-phosphate from L-ascorbate: step 4/4. Its function is as follows. Catalyzes the isomerization of L-ribulose 5-phosphate to D-xylulose 5-phosphate. Is involved in the anaerobic L-ascorbate utilization. In Escherichia coli (strain 55989 / EAEC), this protein is L-ribulose-5-phosphate 4-epimerase UlaF.